A 110-amino-acid polypeptide reads, in one-letter code: Large ribosomal subunit protein uL22 (110 aa).

The protein belongs to the universal ribosomal protein uL22 family. As to quaternary structure, part of the 50S ribosomal subunit.

Functionally, this protein binds specifically to 23S rRNA; its binding is stimulated by other ribosomal proteins, e.g. L4, L17, and L20. It is important during the early stages of 50S assembly. It makes multiple contacts with different domains of the 23S rRNA in the assembled 50S subunit and ribosome. In terms of biological role, the globular domain of the protein is located near the polypeptide exit tunnel on the outside of the subunit, while an extended beta-hairpin is found that lines the wall of the exit tunnel in the center of the 70S ribosome. This is Large ribosomal subunit protein uL22 from Klebsiella pneumoniae (strain 342).